A 440-amino-acid chain; its full sequence is Diels-Alderase mycB (440 aa).

Residues 1–18 form the signal peptide; sequence MGYLVKLACGLLLPLATA. 3 N-linked (GlcNAc...) asparagine glycosylation sites follow: Asn-80, Asn-155, and Asn-332.

Belongs to the Diels-Alderase family.

The catalysed reaction is (5S)-5-(2-methylpropyl)-3-[(2E,6R,8E,10E,12E)-6,8,10,12-tetramethyltetradeca-2,8,10,12-tetraenoyl]-2,5-dihydro-1H-pyrrol-2-one = (5S)-3-[(1S,2R,4aR,6R,8aS)-2-(but-2-en-2-yl)-3,4a,6-trimethyl-1,2,4a,5,6,7,8,8a-octahydronaphthalene-1-carbonyl]-5-(2-methylpropyl)-2,5-dihydro-1H-pyrrol-2-one. The enzyme catalyses (5Z)-5-(2-methylpropylidene)-3-[(2E,6R,8E,10E,12E)-6,8,10,12-tetramethyltetradeca-2,8,10,12-tetraenoyl]-2,5-dihydro-1H-pyrrol-2-one = myceliothermophin E. Its pathway is mycotoxin biosynthesis. Functionally, diels-Alderase; part of the gene cluster that mediates the biosynthesis of myceliothermophins, mycotoxins that contain a trans-fused decalin ring system connected to a conjugated 3-pyrrolin-2-one moiety and that have potential anti-tumor properties. The polyketide synthase module (PKS) of the PKS-NRPS mycA is responsible for the synthesis of the octaketide backbone. The downstream nonribosomal peptide synthetase (NRPS) module then amidates the carboxyl end of the octaketide with a leucine. A reductase-like domain (R) at the C-terminus catalyzes the reductive release of the polyketide-amino acid intermediate. Because mycA lacks a designated enoylreductase (ER) domain, the required activity is provided the enoyl reductase mycC. Following mycA-catalyzed construction and release of aminoacyl polyketide aldehyde, Knoevenagel condensation yields the expected ketone. This C18 keto acyclic precursor is the substrate of the Diels-Alderase mycB, that catalyzes the Diels-Alder cycloaddition to produce myceliothermophin E. A yet unknown oxygenase involved in the production of myceliothermophin A, via substitution with a hydroxyl group at the C21, has still to be identified. The protein is Diels-Alderase mycB of Thermothelomyces thermophilus (strain ATCC 42464 / BCRC 31852 / DSM 1799) (Sporotrichum thermophile).